A 445-amino-acid polypeptide reads, in one-letter code: Phosphoglucosamine mutase 1 (445 aa).

Residue Ser-102 is the Phosphoserine intermediate of the active site. The Mg(2+) site is built by Ser-102, Asp-241, Asp-243, and Asp-245. Phosphoserine is present on Ser-102.

The protein belongs to the phosphohexose mutase family. Mg(2+) is required as a cofactor. In terms of processing, activated by phosphorylation.

It catalyses the reaction alpha-D-glucosamine 1-phosphate = D-glucosamine 6-phosphate. Its function is as follows. Catalyzes the conversion of glucosamine-6-phosphate to glucosamine-1-phosphate. The chain is Phosphoglucosamine mutase 1 from Shewanella amazonensis (strain ATCC BAA-1098 / SB2B).